Here is a 178-residue protein sequence, read N- to C-terminus: Large ribosomal subunit protein bL25 (178 aa).

This sequence belongs to the bacterial ribosomal protein bL25 family. CTC subfamily. As to quaternary structure, part of the 50S ribosomal subunit; part of the 5S rRNA/L5/L18/L25 subcomplex. Contacts the 5S rRNA. Binds to the 5S rRNA independently of L5 and L18.

Its function is as follows. This is one of the proteins that binds to the 5S RNA in the ribosome where it forms part of the central protuberance. This chain is Large ribosomal subunit protein bL25, found in Helicobacter hepaticus (strain ATCC 51449 / 3B1).